We begin with the raw amino-acid sequence, 201 residues long: Small ribosomal subunit protein uS4 (201 aa).

The S4 RNA-binding domain maps to 91 to 154; it reads TRLDNVVYRA…RKMEWFEEAQ (64 aa).

This sequence belongs to the universal ribosomal protein uS4 family. In terms of assembly, part of the 30S ribosomal subunit. Contacts protein S5. The interaction surface between S4 and S5 is involved in control of translational fidelity.

One of the primary rRNA binding proteins, it binds directly to 16S rRNA where it nucleates assembly of the body of the 30S subunit. Functionally, with S5 and S12 plays an important role in translational accuracy. In Corynebacterium ammoniagenes (Brevibacterium ammoniagenes), this protein is Small ribosomal subunit protein uS4.